A 327-amino-acid chain; its full sequence is Transcription factor bHLH48 (327 aa).

The disordered stretch occupies residues 137-179 (EPAETDSMVENQNQSYSSGKRKEREKKVKSSTKKNKSSVESDK). In terms of domain architecture, bHLH spans 191–241 (QATDNHSLAERARREKINARMKLLQELVPGCDKIQGTALVLDEIINHVQTL).

In terms of assembly, homodimer. Expressed in leaves, stems, and flowers.

The protein resides in the nucleus. The chain is Transcription factor bHLH48 (BHLH48) from Arabidopsis thaliana (Mouse-ear cress).